The primary structure comprises 204 residues: Holliday junction branch migration complex subunit RuvA (204 aa).

Residues 1 to 64 are domain I; sequence MIGRLRGILL…EDAQLLYGFN (64 aa). The domain II stretch occupies residues 65–143; sequence TVKERALFRE…GWGAGDLFTP (79 aa). A flexible linker region spans residues 144-155; sequence FTDAAPTDSAAA. Residues 156–204 are domain III; it reads SSNSAEEEAVSALLALGYKPTQASKVVSQIAKPDMSSEQLIREALKSMV.

It belongs to the RuvA family. In terms of assembly, homotetramer. Forms an RuvA(8)-RuvB(12)-Holliday junction (HJ) complex. HJ DNA is sandwiched between 2 RuvA tetramers; dsDNA enters through RuvA and exits via RuvB. An RuvB hexamer assembles on each DNA strand where it exits the tetramer. Each RuvB hexamer is contacted by two RuvA subunits (via domain III) on 2 adjacent RuvB subunits; this complex drives branch migration. In the full resolvosome a probable DNA-RuvA(4)-RuvB(12)-RuvC(2) complex forms which resolves the HJ.

The protein localises to the cytoplasm. Functionally, the RuvA-RuvB-RuvC complex processes Holliday junction (HJ) DNA during genetic recombination and DNA repair, while the RuvA-RuvB complex plays an important role in the rescue of blocked DNA replication forks via replication fork reversal (RFR). RuvA specifically binds to HJ cruciform DNA, conferring on it an open structure. The RuvB hexamer acts as an ATP-dependent pump, pulling dsDNA into and through the RuvAB complex. HJ branch migration allows RuvC to scan DNA until it finds its consensus sequence, where it cleaves and resolves the cruciform DNA. The sequence is that of Holliday junction branch migration complex subunit RuvA from Vibrio parahaemolyticus serotype O3:K6 (strain RIMD 2210633).